The sequence spans 252 residues: MNKVVVKNVTFGEGAPKICVPMVGKTVAALKEEAEMLKTIDLDVVEWRVDFFEDVKDLVKVKAALDEIRAILPETPILFTFRSAKEGGELAVSDEFYFELNETLAGTGKIDLVDVELFNEEADVLRLIETAHKNNVKVVMSNHDFDKTPAKEEIVSRLTRMEALGADLPKIAVMPKSAGDVLTLLDATNTVSEKANQPIITMSMAGTGVISRLAGEVFGSAMTFGAAKKASAPGQIDVNELRHVLDLLHKQF.

Residues 46–48 (EWR) and Arg-82 contribute to the 3-dehydroquinate site. Catalysis depends on His-143, which acts as the Proton donor/acceptor. Catalysis depends on Lys-170, which acts as the Schiff-base intermediate with substrate. Residues Arg-212, Ser-231, and Gln-235 each coordinate 3-dehydroquinate.

The protein belongs to the type-I 3-dehydroquinase family. As to quaternary structure, homodimer.

It catalyses the reaction 3-dehydroquinate = 3-dehydroshikimate + H2O. It functions in the pathway metabolic intermediate biosynthesis; chorismate biosynthesis; chorismate from D-erythrose 4-phosphate and phosphoenolpyruvate: step 3/7. In terms of biological role, involved in the third step of the chorismate pathway, which leads to the biosynthesis of aromatic amino acids. Catalyzes the cis-dehydration of 3-dehydroquinate (DHQ) and introduces the first double bond of the aromatic ring to yield 3-dehydroshikimate. The chain is 3-dehydroquinate dehydratase from Listeria innocua serovar 6a (strain ATCC BAA-680 / CLIP 11262).